The sequence spans 197 residues: dITP/XTP pyrophosphatase (197 aa).

Substrate is bound at residue 9 to 14 (SNNAGK). The Proton acceptor role is filled by D70. Mg(2+) is bound at residue D70. Substrate is bound by residues S71, 153-156 (FGYD), K176, and 181-182 (HR).

It belongs to the HAM1 NTPase family. In terms of assembly, homodimer. The cofactor is Mg(2+).

It carries out the reaction XTP + H2O = XMP + diphosphate + H(+). It catalyses the reaction dITP + H2O = dIMP + diphosphate + H(+). The enzyme catalyses ITP + H2O = IMP + diphosphate + H(+). Functionally, pyrophosphatase that catalyzes the hydrolysis of nucleoside triphosphates to their monophosphate derivatives, with a high preference for the non-canonical purine nucleotides XTP (xanthosine triphosphate), dITP (deoxyinosine triphosphate) and ITP. Seems to function as a house-cleaning enzyme that removes non-canonical purine nucleotides from the nucleotide pool, thus preventing their incorporation into DNA/RNA and avoiding chromosomal lesions. This chain is dITP/XTP pyrophosphatase, found in Chromobacterium violaceum (strain ATCC 12472 / DSM 30191 / JCM 1249 / CCUG 213 / NBRC 12614 / NCIMB 9131 / NCTC 9757 / MK).